We begin with the raw amino-acid sequence, 285 residues long: Diaminopimelate epimerase (285 aa).

Residues Asn14 and Asn67 each contribute to the substrate site. Cys76 functions as the Proton donor in the catalytic mechanism. Residues 77-78 (GN), Asn166, Asn199, and 217-218 (ER) each bind substrate. The Proton acceptor role is filled by Cys226. Substrate is bound at residue 227 to 228 (GT).

It belongs to the diaminopimelate epimerase family. In terms of assembly, homodimer.

It is found in the cytoplasm. It carries out the reaction (2S,6S)-2,6-diaminopimelate = meso-2,6-diaminopimelate. Its pathway is amino-acid biosynthesis; L-lysine biosynthesis via DAP pathway; DL-2,6-diaminopimelate from LL-2,6-diaminopimelate: step 1/1. Functionally, catalyzes the stereoinversion of LL-2,6-diaminopimelate (L,L-DAP) to meso-diaminopimelate (meso-DAP), a precursor of L-lysine and an essential component of the bacterial peptidoglycan. The protein is Diaminopimelate epimerase of Bacillus licheniformis (strain ATCC 14580 / DSM 13 / JCM 2505 / CCUG 7422 / NBRC 12200 / NCIMB 9375 / NCTC 10341 / NRRL NRS-1264 / Gibson 46).